The primary structure comprises 666 residues: Fructose-1,6-bisphosphatase class 3 (666 aa).

It belongs to the FBPase class 3 family. Mn(2+) serves as cofactor.

The enzyme catalyses beta-D-fructose 1,6-bisphosphate + H2O = beta-D-fructose 6-phosphate + phosphate. It participates in carbohydrate biosynthesis; gluconeogenesis. The polypeptide is Fructose-1,6-bisphosphatase class 3 (Parabacteroides distasonis (strain ATCC 8503 / DSM 20701 / CIP 104284 / JCM 5825 / NCTC 11152)).